Here is a 447-residue protein sequence, read N- to C-terminus: Probable glycosyltransferase 7 (447 aa).

The segment at Met-1 to Ser-31 is disordered. The Cytoplasmic portion of the chain corresponds to Met-1–Asp-37. The segment covering Arg-8–Gln-23 has biased composition (basic residues). A helical; Signal-anchor for type II membrane protein transmembrane segment spans residues Ala-38–Ser-60. Residues Ser-61–Ala-447 lie on the Lumenal side of the membrane. Asn-285 and Asn-329 each carry an N-linked (GlcNAc...) asparagine glycan.

Belongs to the glycosyltransferase 34 family.

The protein resides in the golgi apparatus membrane. Its function is as follows. Probable glycosyltransferase that may be involved in the biosynthesis of xyloglucan. In Oryza sativa subsp. indica (Rice), this protein is Probable glycosyltransferase 7.